We begin with the raw amino-acid sequence, 276 residues long: Glucosamine-6-phosphate deaminase 2 (276 aa).

Aspartate 72 serves as the catalytic Proton acceptor; for enolization step. Residues 103–131 are a coiled coil; sequence NAHILDGNAADLQAECDAFEEKIKEAGGI. Aspartate 141 (for ring-opening step) is an active-site residue. Histidine 143 functions as the Proton acceptor; for ring-opening step in the catalytic mechanism. Glutamate 148 functions as the For ring-opening step in the catalytic mechanism. Residue threonine 161 is modified to Phosphothreonine.

This sequence belongs to the glucosamine/galactosamine-6-phosphate isomerase family. In terms of assembly, homohexamer.

The protein resides in the cytoplasm. It catalyses the reaction alpha-D-glucosamine 6-phosphate + H2O = beta-D-fructose 6-phosphate + NH4(+). Its pathway is nucleotide-sugar biosynthesis; UDP-N-acetyl-alpha-D-glucosamine biosynthesis; alpha-D-glucosamine 6-phosphate from D-fructose 6-phosphate: step 1/1. With respect to regulation, allosterically activated by N-acetylglucosamine-6-phosphate (GlcNAc6P). Catalyzes the reversible conversion of alpha-D-glucosamine 6-phosphate (GlcN-6P) into beta-D-fructose 6-phosphate (Fru-6P) and ammonium ion, a regulatory reaction step in de novo uridine diphosphate-N-acetyl-alpha-D-glucosamine (UDP-GlcNAc) biosynthesis via hexosamine pathway. Deamination is coupled to aldo-keto isomerization mediating the metabolic flux from UDP-GlcNAc toward Fru-6P. At high ammonium level can drive amination and isomerization of Fru-6P toward hexosamines and UDP-GlcNAc synthesis. Has a role in fine tuning the metabolic fluctuations of cytosolic UDP-GlcNAc and their effects on hyaluronan synthesis that occur during tissue remodeling. The polypeptide is Glucosamine-6-phosphate deaminase 2 (Mus musculus (Mouse)).